The following is a 1029-amino-acid chain: Probable E3 ubiquitin protein ligase C167.07c (1029 aa).

The region spanning 46 to 75 is the IQ domain; it reads AENNSVAVQSLSRGFLARRKFKQDFRERWI. The HECT domain maps to 692–1029; that stretch reads FGKLLKGPIR…VRSGVGFGFS (338 aa). The Glycyl thioester intermediate role is filled by Cys997.

Its subcellular location is the cytoplasm. It localises to the nucleus. The enzyme catalyses S-ubiquitinyl-[E2 ubiquitin-conjugating enzyme]-L-cysteine + [acceptor protein]-L-lysine = [E2 ubiquitin-conjugating enzyme]-L-cysteine + N(6)-ubiquitinyl-[acceptor protein]-L-lysine.. Its function is as follows. Probable E3 ubiquitin-protein ligase which mediates ubiquitination and subsequent proteasomal degradation of target proteins. This chain is Probable E3 ubiquitin protein ligase C167.07c, found in Schizosaccharomyces pombe (strain 972 / ATCC 24843) (Fission yeast).